A 241-amino-acid chain; its full sequence is Uracil-DNA glycosylase (241 aa).

The active-site Proton acceptor is the Asp-68.

The protein belongs to the uracil-DNA glycosylase (UDG) superfamily. UNG family.

Its subcellular location is the cytoplasm. The catalysed reaction is Hydrolyzes single-stranded DNA or mismatched double-stranded DNA and polynucleotides, releasing free uracil.. Its function is as follows. Excises uracil residues from the DNA which can arise as a result of misincorporation of dUMP residues by DNA polymerase or due to deamination of cytosine. This is Uracil-DNA glycosylase from Rhizobium meliloti (strain 1021) (Ensifer meliloti).